A 127-amino-acid polypeptide reads, in one-letter code: MSSICHTLSGLISSNLIGLCVKTAPKILRIFVRLCTYTFYNLLKSTGLALGLIISSYNKVVKKSLKILPVTSGKKYLAAKANLFFSPSGLAEANFAVSSFNILAVNSGVTLSPVSLKTTPCLTHWYN.

This is an uncharacterized protein from Saccharomyces cerevisiae (strain ATCC 204508 / S288c) (Baker's yeast).